Consider the following 95-residue polypeptide: Small ribosomal subunit protein bS20 (95 aa).

2 disordered regions span residues 1-26 and 76-95; these read MALR…RSRK and KSRL…AQPA. Over residues 80-95 the composition is skewed to low complexity; the sequence is AKALNKAKAAQAAQPA.

The protein belongs to the bacterial ribosomal protein bS20 family.

In terms of biological role, binds directly to 16S ribosomal RNA. In Deinococcus geothermalis (strain DSM 11300 / CIP 105573 / AG-3a), this protein is Small ribosomal subunit protein bS20.